We begin with the raw amino-acid sequence, 550 residues long: Hydroxylamine reductase (550 aa).

[2Fe-2S] cluster contacts are provided by Cys-3, Cys-6, Cys-18, and Cys-25. Hybrid [4Fe-2O-2S] cluster is bound by residues His-249, Glu-273, Cys-317, Cys-405, Cys-433, Cys-458, Glu-492, and Lys-494. At Cys-405 the chain carries Cysteine persulfide.

This sequence belongs to the HCP family. [2Fe-2S] cluster is required as a cofactor. Hybrid [4Fe-2O-2S] cluster serves as cofactor.

The protein resides in the cytoplasm. It carries out the reaction A + NH4(+) + H2O = hydroxylamine + AH2 + H(+). Functionally, catalyzes the reduction of hydroxylamine to form NH(3) and H(2)O. This Salmonella typhimurium (strain LT2 / SGSC1412 / ATCC 700720) protein is Hydroxylamine reductase.